Consider the following 358-residue polypeptide: Tyrosinase ustQ (358 aa).

N28 is a glycosylation site (N-linked (GlcNAc...) asparagine). A helical transmembrane segment spans residues 37–57 (FVPVYAGLTIISLITVTVSLV). 2 N-linked (GlcNAc...) asparagine glycosylation sites follow: N91 and N109. Cu cation contacts are provided by H128 and H137. N-linked (GlcNAc...) asparagine glycans are attached at residues N172 and N214. H266, H270, and H292 together coordinate Cu cation. N-linked (GlcNAc...) asparagine glycosylation is found at N321 and N325.

This sequence belongs to the tyrosinase family. It depends on Cu(2+) as a cofactor.

It localises to the membrane. The enzyme catalyses 2 L-dopa + O2 = 2 L-dopaquinone + 2 H2O. It carries out the reaction L-tyrosine + O2 = L-dopaquinone + H2O. Its pathway is mycotoxin biosynthesis. Its function is as follows. Tyrosinase; part of the gene cluster that mediates the biosynthesis of the secondary metabolite ustiloxin B, an antimitotic tetrapeptide. First, ustA is processed by the subtilisin-like endoprotease Kex2 that is outside the ustiloxin B gene cluster, at the C-terminal side of Arg-Lys, after transfer to Golgi apparatus through the endoplasmic reticulum (ER). Cleavage by KEX2 generates 16 peptides YAIG-I to YAIG-XVI. To process the precursor peptide further, at least two peptidases are necessary to cleave the N-terminal and C-terminal sides of the Tyr-Ala-Ile-Gly core peptide which serves as backbone for the synthesis of ustiloxin B, through cyclization and modification of the tyrosine with a non-protein coding amino acid, norvaline. One of the two peptidases must be the serine peptidase ustP; and the other pepdidase is probably ustH. Macrocyclization of the core peptide derived from ustA requires the tyrosinase ustQ, as well as the homologous oxidases ustYa and ustYb, and leads to the production of the first cyclization product N-desmethylustiloxin F. For the formation of N-desmethylustiloxin F, three oxidation steps are required, hydroxylation at the benzylic position, hydroxylation at either the aromatic ring of Tyr or beta-position of Ile, and oxidative cyclization. UstQ may catalyze the oxidation of a phenol moiety, whereas the ustYa and ustYb are most likely responsible for the remaining two-step oxidations. N-desmethylustiloxin F is then methylated by ustM to yield ustiloxin F which in turn substrate of the cytochrome P450 monooxygenase ustC which catalyzes the formation of S-deoxyustiloxin H. The flavoprotein monooxygenases ustF1 and ustF2 then participate in the modification of the side chain of S-deoxyustiloxin H, leading to the synthesis of an oxime intermediate, via ustiloxin H. Finally, carboxylative dehydration performed by the cysteine desulfurase-like protein ustD yields ustiloxin B. This chain is Tyrosinase ustQ, found in Aspergillus flavus (strain ATCC 200026 / FGSC A1120 / IAM 13836 / NRRL 3357 / JCM 12722 / SRRC 167).